The following is a 335-amino-acid chain: Selenide, water dikinase (335 aa).

Residue selenocysteine 7 is part of the active site. Residue selenocysteine 7 is a non-standard amino acid, selenocysteine. ATP is bound by residues lysine 10 and 36–38 (LGD). Aspartate 39 serves as a coordination point for Mg(2+). ATP-binding positions include aspartate 55, aspartate 78, and 126–128 (GHT). Mg(2+) is bound at residue aspartate 78. Position 232 (aspartate 232) interacts with Mg(2+).

This sequence belongs to the selenophosphate synthase 1 family. Class I subfamily. In terms of assembly, homodimer. Mg(2+) is required as a cofactor.

The catalysed reaction is hydrogenselenide + ATP + H2O = selenophosphate + AMP + phosphate + 2 H(+). Functionally, synthesizes selenophosphate from selenide and ATP. This is Selenide, water dikinase from Methanococcus maripaludis (strain DSM 14266 / JCM 13030 / NBRC 101832 / S2 / LL).